We begin with the raw amino-acid sequence, 394 residues long: GPI transamidase component GAB1 (394 aa).

Over 1 to 135 the chain is Cytoplasmic; sequence MDSTALKVAL…TLLSCISRSS (135 aa). Residues 136 to 156 form a helical membrane-spanning segment; that stretch reads IIFTNFAISSSLYCILAEGNV. The Lumenal segment spans residues 157–160; that stretch reads LLSS. A helical transmembrane segment spans residues 161 to 181; that stretch reads VMISISGYLSVYPILLLIPLL. The Cytoplasmic portion of the chain corresponds to 182–190; the sequence is GMLKSWRQR. Residues 191–211 traverse the membrane as a helical segment; the sequence is ILSAIVSILSLLILLLFSYSI. Topologically, residues 212–224 are lumenal; that stretch reads LGSQSWSFLTQVY. Residues 225–245 traverse the membrane as a helical segment; the sequence is GSIITFEKVFPNLGLWWYFFI. The segment at 235-255 is may be involved in recognition of long-chain fatty acids in GPI; the sequence is PNLGLWWYFFIEMFDTFIPFF. At 246–250 the chain is on the cytoplasmic side; sequence EMFDT. Residues 251-271 form a helical membrane-spanning segment; that stretch reads FIPFFKAVFNIFIAVFITPFT. Topologically, residues 272-297 are lumenal; it reads LRYHKQPFYAFILCIGWIVLTKPYPS. The helical transmembrane segment at 298 to 318 threads the bilayer; that stretch reads LGDAGFFFSFLPFFTPLFGYL. At 319–324 the chain is on the cytoplasmic side; sequence RYPIIS. A helical membrane pass occupies residues 325–345; that stretch reads ALLFLHAIVLAPIFYHLWVVL. At 346–351 the chain is on the lumenal side; the sequence is GSGNSN. A helical transmembrane segment spans residues 352 to 372; the sequence is FFYAISLVYALAIASILVDLN. Over 373-394 the chain is Cytoplasmic; it reads WAMLRIEYDNGIPNFKLKVTQI.

The protein belongs to the PIGU family. As to quaternary structure, forms a complex with GPI16, GPI17, GPI8 and GAA1.

It localises to the endoplasmic reticulum membrane. The protein operates within glycolipid biosynthesis; glycosylphosphatidylinositol-anchor biosynthesis. Functionally, component of the GPI transamidase complex. May be involved in the recognition of either the GPI attachment signal or the lipid portion of GPI. The sequence is that of GPI transamidase component GAB1 (GAB1) from Saccharomyces cerevisiae (strain ATCC 204508 / S288c) (Baker's yeast).